The chain runs to 156 residues: 6,7-dimethyl-8-ribityllumazine synthase (156 aa).

Residues phenylalanine 23, 57 to 59 (AFE), and 81 to 83 (AVI) each bind 5-amino-6-(D-ribitylamino)uracil. 86–87 (ST) is a (2S)-2-hydroxy-3-oxobutyl phosphate binding site. Histidine 89 functions as the Proton donor in the catalytic mechanism. Phenylalanine 114 is a 5-amino-6-(D-ribitylamino)uracil binding site. Arginine 128 contributes to the (2S)-2-hydroxy-3-oxobutyl phosphate binding site.

This sequence belongs to the DMRL synthase family.

The enzyme catalyses (2S)-2-hydroxy-3-oxobutyl phosphate + 5-amino-6-(D-ribitylamino)uracil = 6,7-dimethyl-8-(1-D-ribityl)lumazine + phosphate + 2 H2O + H(+). Its pathway is cofactor biosynthesis; riboflavin biosynthesis; riboflavin from 2-hydroxy-3-oxobutyl phosphate and 5-amino-6-(D-ribitylamino)uracil: step 1/2. Its function is as follows. Catalyzes the formation of 6,7-dimethyl-8-ribityllumazine by condensation of 5-amino-6-(D-ribitylamino)uracil with 3,4-dihydroxy-2-butanone 4-phosphate. This is the penultimate step in the biosynthesis of riboflavin. This is 6,7-dimethyl-8-ribityllumazine synthase from Campylobacter fetus subsp. fetus (strain 82-40).